Reading from the N-terminus, the 260-residue chain is Snake venom serine protease pallabin (260 aa).

A signal peptide spans 1-18 (MVLIRVLANLLILQLSYA). The propeptide occupies 19–24 (QKSSKL). The region spanning 25 to 251 (VIGGDECNIN…HLDWIENIIA (227 aa)) is the Peptidase S1 domain. Disulfide bonds link cysteine 31-cysteine 163, cysteine 50-cysteine 66, cysteine 98-cysteine 258, cysteine 142-cysteine 212, cysteine 174-cysteine 191, and cysteine 202-cysteine 227. Catalysis depends on histidine 65, which acts as the Charge relay system. An N-linked (GlcNAc...) asparagine glycan is attached at asparagine 103. Aspartate 110 functions as the Charge relay system in the catalytic mechanism. Residue serine 206 is the Charge relay system of the active site.

It belongs to the peptidase S1 family. Snake venom subfamily. As to quaternary structure, monomer. In terms of tissue distribution, expressed by the venom gland.

Its subcellular location is the secreted. Snake venom serine protease that may act in the hemostasis system of the prey. The polypeptide is Snake venom serine protease pallabin (JZTHR5) (Gloydius halys (Chinese water mocassin)).